Consider the following 498-residue polypeptide: ATP synthase subunit beta, chloroplastic (498 aa).

172–179 (GGAGVGKT) is an ATP binding site.

This sequence belongs to the ATPase alpha/beta chains family. As to quaternary structure, F-type ATPases have 2 components, CF(1) - the catalytic core - and CF(0) - the membrane proton channel. CF(1) has five subunits: alpha(3), beta(3), gamma(1), delta(1), epsilon(1). CF(0) has four main subunits: a(1), b(1), b'(1) and c(9-12).

It localises to the plastid. Its subcellular location is the chloroplast thylakoid membrane. The enzyme catalyses ATP + H2O + 4 H(+)(in) = ADP + phosphate + 5 H(+)(out). In terms of biological role, produces ATP from ADP in the presence of a proton gradient across the membrane. The catalytic sites are hosted primarily by the beta subunits. The chain is ATP synthase subunit beta, chloroplastic from Asarum canadense (Wild ginger).